The following is a 64-amino-acid chain: Conotoxin Leo-T1 (64 aa).

The N-terminal stretch at 1 to 22 (MRCLPVFIILLLLIPSAPSVDA) is a signal peptide. The propeptide occupies 23 to 48 (QPKTEDDVPLASLHDNAKLTLQGLWD).

This sequence belongs to the conotoxin T superfamily. Post-translationally, contains 2 disulfide bonds that can be either 'C1-C3, C2-C4' or 'C1-C4, C2-C3', since these disulfide connectivities have been observed for conotoxins with cysteine framework V (for examples, see AC P0DQQ7 and AC P81755). As to expression, expressed by the venom duct.

It localises to the secreted. This chain is Conotoxin Leo-T1, found in Conus leopardus (Leopard cone).